We begin with the raw amino-acid sequence, 427 residues long: 3-isopropylmalate dehydratase large subunit (427 aa).

[4Fe-4S] cluster-binding residues include Cys-308, Cys-368, and Cys-371.

The protein belongs to the aconitase/IPM isomerase family. LeuC type 2 subfamily. Heterodimer of LeuC and LeuD. It depends on [4Fe-4S] cluster as a cofactor.

The catalysed reaction is (2R,3S)-3-isopropylmalate = (2S)-2-isopropylmalate. The protein operates within amino-acid biosynthesis; L-leucine biosynthesis; L-leucine from 3-methyl-2-oxobutanoate: step 2/4. In terms of biological role, catalyzes the isomerization between 2-isopropylmalate and 3-isopropylmalate, via the formation of 2-isopropylmaleate. This is 3-isopropylmalate dehydratase large subunit from Geobacter metallireducens (strain ATCC 53774 / DSM 7210 / GS-15).